Consider the following 675-residue polypeptide: Protein distal antenna (675 aa).

Residues 5 to 56 (TKGKRPLRHLTATDKIDAIQRIHDGESKASVARDIGVPESTLRGWCKNEEKL) enclose the HTH psq-type domain. The segment at residues 32–52 (KASVARDIGVPESTLRGWCKN) is a DNA-binding region (H-T-H motif). 5 disordered regions span residues 239–269 (QSLR…KNPS), 337–393 (LYSS…PEDT), 458–534 (LNII…SKCN), 546–596 (FQNP…AHKS), and 655–675 (ERQQ…RRRK). Residues 339–368 (SSMPRPSSPQQSSSPPQQHQQVQHHPSTQT) are compositionally biased toward low complexity. Pro residues predominate over residues 369-384 (PTPPIVSTPQPTPPSS). Basic and acidic residues predominate over residues 469–478 (VKSEPEDLSN). Positions 479–493 (HNHSSSNAAAVAAPA) are enriched in low complexity. Residues 499-508 (FNPSPSTSAK) are compositionally biased toward polar residues. A compositionally biased stretch (acidic residues) spans 513–528 (QEDDEEQAGPADDESP). The span at 559 to 579 (NLSIRSNNSPRRRSVSPAVSN) shows a compositional bias: low complexity.

In terms of assembly, homomers. Interacts with itself, danr, ey and dac to form a complex (or complexes) containing the RD factors.

It localises to the nucleus. Probable transcription factor with a role in the retinal determination (RD) network. Contributes to differentiation of antenna-specific characteristics. In Aedes aegypti (Yellowfever mosquito), this protein is Protein distal antenna.